The sequence spans 207 residues: Large ribosomal subunit protein uL4 (207 aa).

The interval 49–79 (HKVKSRGEVSGGGKKPWRQKGTGRARAGTSR) is disordered.

The protein belongs to the universal ribosomal protein uL4 family. Part of the 50S ribosomal subunit.

Its function is as follows. One of the primary rRNA binding proteins, this protein initially binds near the 5'-end of the 23S rRNA. It is important during the early stages of 50S assembly. It makes multiple contacts with different domains of the 23S rRNA in the assembled 50S subunit and ribosome. Forms part of the polypeptide exit tunnel. The sequence is that of Large ribosomal subunit protein uL4 from Heliobacterium modesticaldum (strain ATCC 51547 / Ice1).